A 449-amino-acid chain; its full sequence is Gamma-aminobutyric acid receptor subunit delta (449 aa).

A signal peptide spans M1–A24. Over M25–I251 the chain is Extracellular. 2 N-linked (GlcNAc...) asparagine glycosylation sites follow: N103 and N106. Residues C164 and C178 are joined by a disulfide bond. The chain crosses the membrane as a helical span at residues I252–I271. Residues S272 to A275 lie on the Cytoplasmic side of the membrane. Residues V276–R298 form a helical membrane-spanning segment. At S299 to K308 the chain is on the extracellular side. Residues A309–A331 form a helical membrane-spanning segment. The Cytoplasmic portion of the chain corresponds to H332–T423. A Phosphoserine modification is found at S390. The chain crosses the membrane as a helical span at residues I424–A446. At Y447–M449 the chain is on the extracellular side.

It belongs to the ligand-gated ion channel (TC 1.A.9) family. Gamma-aminobutyric acid receptor (TC 1.A.9.5) subfamily. GABRD sub-subfamily. In terms of assembly, heteropentamer, formed by a combination of alpha (GABRA1-6), beta (GABRB1-3), gamma (GABRG1-3), delta (GABRD), epsilon (GABRE), rho (GABRR1-3), pi (GABRP) and theta (GABRQ) chains, each subunit exhibiting distinct physiological and pharmacological properties.

The protein localises to the cell membrane. The enzyme catalyses chloride(in) = chloride(out). Its function is as follows. Delta subunit of the heteropentameric ligand-gated chloride channel gated by gamma-aminobutyric acid (GABA), a major inhibitory neurotransmitter in the brain. GABA-gated chloride channels, also named GABA(A) receptors (GABAAR), consist of five subunits arranged around a central pore and contain GABA active binding site(s) located at the alpha and beta subunit interface(s). When activated by GABA, GABAARs selectively allow the flow of chloride anions across the cell membrane down their electrochemical gradient. GABAARs containing delta/GABRD subunits are predominantly expressed and located in extrasynaptic or perisynaptic positions on hippocampus and cerebellar granule cells, and contribute to the tonic GABAergic inhibition. GABAAR containing alpha-4-beta-3-delta subunits can simultaneously bind GABA and histamine where histamine binds at the interface of two neighboring beta subunits, which may be involved in the regulation of sleep and wakefulness. The protein is Gamma-aminobutyric acid receptor subunit delta of Mus musculus (Mouse).